The primary structure comprises 194 residues: Fe/S biogenesis protein NfuA (194 aa).

C152 and C155 together coordinate [4Fe-4S] cluster.

This sequence belongs to the NfuA family. In terms of assembly, homodimer. [4Fe-4S] cluster serves as cofactor.

Involved in iron-sulfur cluster biogenesis. Binds a 4Fe-4S cluster, can transfer this cluster to apoproteins, and thereby intervenes in the maturation of Fe/S proteins. Could also act as a scaffold/chaperone for damaged Fe/S proteins. In Azotobacter vinelandii (strain DJ / ATCC BAA-1303), this protein is Fe/S biogenesis protein NfuA.